Reading from the N-terminus, the 527-residue chain is Estrogen receptor beta (527 aa).

The interval 1–145 (MDVKNSPSSL…SPSSKRDAHF (145 aa)) is modulating. Serine 84 and serine 102 each carry phosphoserine; by MAPK. NR C4-type zinc fingers lie at residues 146–166 (CAVC…CEGC) and 182–206 (CPAT…LRKC). Residues 146–211 (CAVCSDYASG…RLRKCYEVGM (66 aa)) constitute a DNA-binding region (nuclear receptor). One can recognise an NR LBD domain in the interval 261–495 (SPEQLVLTLL…DLLLEMLNAH (235 aa)).

This sequence belongs to the nuclear hormone receptor family. NR3 subfamily. As to quaternary structure, binds DNA as a homodimer. Can form a heterodimer with ESR1. Interacts with NCOA1, NCOA3, NCOA5 and NCOA6 coactivators, leading to a strong increase of transcription of target genes. Interacts with UBE1C and AKAP13. Interacts with DNTTIP2. Interacts with CCDC62 in the presence of estradiol/E2; this interaction seems to enhance the transcription of target genes. Interacts with DNAAF4. Interacts with PRMT2. Interacts with CCAR2 (via N-terminus) in a ligand-independent manner. Interacts with RBM39, in the presence of estradiol (E2). Interacts with STUB1/CHIP. Phosphorylation at Ser-84 and Ser-102 recruits NCOA1. As to expression, present in granulosa cells of antral follicles in various stages of follicular growth.

The protein localises to the nucleus. Its function is as follows. Nuclear hormone receptor. Binds estrogens with an affinity similar to that of ESR1ESR1/ER-alpha, and activates expression of reporter genes containing estrogen response elements (ERE) in an estrogen-dependent manner. This is Estrogen receptor beta (ESR2) from Bos taurus (Bovine).